The following is a 298-amino-acid chain: PYK10-binding protein 1 (298 aa).

N-acetylalanine is present on alanine 2. Jacalin-type lectin domains lie at 2-142 (AQKV…YFAP) and 152-295 (AKQL…HVRP). Serine 20 carries the phosphoserine modification.

The protein belongs to the jacalin lectin family. As to quaternary structure, component of the PYK10 complex, at least composed of PYK10/BGLU23, BGLU21, BGLU22, JAL22, JAL23, PBP1/JAL30, PBP2/JAL31, JAL32, JAL33, JAL34, JAL35, GLL22 and GLL23. In terms of tissue distribution, expressed exclusively in roots.

It is found in the cytoplasm. Functionally, inhibitor-type lectin that may regulate the correct polymerization of BGLU23/PYK10 upon tissue damage. Activates BGLU21, BGLU22 and BGLU23. The chain is PYK10-binding protein 1 (PBP1) from Arabidopsis thaliana (Mouse-ear cress).